The primary structure comprises 458 residues: NADH-ubiquinone oxidoreductase chain 4 (458 aa).

12 helical membrane-spanning segments follow: residues 21 to 43 (ASLW…QWLN), 58 to 78 (IDQI…LMLL), 93 to 112 (RTFI…AFSA), 116 to 138 (TLFY…RWGN), 145 to 165 (AGIY…VTIL), 196 to 216 (GLAL…HLWL), 224 to 244 (PIAG…YGIM), 257 to 277 (LSYP…SICL), 285 to 305 (LIAY…MIQT), 309 to 329 (FSGA…LFCL), 341 to 361 (ILLL…WWLL), and 379 to 399 (LTIM…TGLA).

The protein belongs to the complex I subunit 4 family.

It localises to the mitochondrion membrane. It catalyses the reaction a ubiquinone + NADH + 5 H(+)(in) = a ubiquinol + NAD(+) + 4 H(+)(out). In terms of biological role, core subunit of the mitochondrial membrane respiratory chain NADH dehydrogenase (Complex I) that is believed to belong to the minimal assembly required for catalysis. Complex I functions in the transfer of electrons from NADH to the respiratory chain. The immediate electron acceptor for the enzyme is believed to be ubiquinone. In Struthio camelus (Common ostrich), this protein is NADH-ubiquinone oxidoreductase chain 4 (MT-ND4).